The chain runs to 78 residues: MALFEDIQAVIAEQLNVDAVQVTPEAEFVKDLGADSLDVVELIMALEEKFGVEIPDEQAEKIINVGDVVKYIEDNKLA.

Positions Met-1–Lys-76 constitute a Carrier domain. An O-(pantetheine 4'-phosphoryl)serine modification is found at Ser-36.

The protein belongs to the acyl carrier protein (ACP) family. Post-translationally, 4'-phosphopantetheine is transferred from CoA to a specific serine of apo-ACP by AcpS. This modification is essential for activity because fatty acids are bound in thioester linkage to the sulfhydryl of the prosthetic group.

It localises to the cytoplasm. It functions in the pathway lipid metabolism; fatty acid biosynthesis. Carrier of the growing fatty acid chain in fatty acid biosynthesis. The polypeptide is Acyl carrier protein (Helicobacter pylori (strain ATCC 700392 / 26695) (Campylobacter pylori)).